The following is a 125-amino-acid chain: Fluoride-specific ion channel FluC (125 aa).

4 helical membrane passes run 4–24 (VIYVALGGAVGSVLRYWVGIV), 32–52 (FLPWGTFSVNLIGSFCIGLFA), 68–88 (LLITGLLGGFTTFSAFMLDTV), and 100–120 (AFYVAASIGFGVGAVFAGLAV). The Na(+) site is built by Gly-75 and Thr-78.

The protein belongs to the fluoride channel Fluc/FEX (TC 1.A.43) family.

The protein resides in the cell inner membrane. The enzyme catalyses fluoride(in) = fluoride(out). Its activity is regulated as follows. Na(+) is not transported, but it plays an essential structural role and its presence is essential for fluoride channel function. Fluoride-specific ion channel. Important for reducing fluoride concentration in the cell, thus reducing its toxicity. The polypeptide is Fluoride-specific ion channel FluC (Allorhizobium ampelinum (strain ATCC BAA-846 / DSM 112012 / S4) (Agrobacterium vitis (strain S4))).